The primary structure comprises 405 residues: Phosphoglycerate kinase (405 aa).

Residues 24-26 (DFN), Arg-40, 63-66 (HLGR), Arg-122, and Arg-162 contribute to the substrate site. ATP-binding positions include Lys-212, Glu-331, and 361–364 (GGDS).

The protein belongs to the phosphoglycerate kinase family. As to quaternary structure, monomer.

The protein resides in the cytoplasm. It catalyses the reaction (2R)-3-phosphoglycerate + ATP = (2R)-3-phospho-glyceroyl phosphate + ADP. Its pathway is carbohydrate degradation; glycolysis; pyruvate from D-glyceraldehyde 3-phosphate: step 2/5. The chain is Phosphoglycerate kinase from Corynebacterium aurimucosum (strain ATCC 700975 / DSM 44827 / CIP 107346 / CN-1) (Corynebacterium nigricans).